Here is a 486-residue protein sequence, read N- to C-terminus: Bifunctional protein HldE (486 aa).

The interval 1 to 331 is ribokinase; that stretch reads MAEHDDGDLI…VDAVKPASGA (331 aa). Residue 208-211 coordinates ATP; the sequence is NRRE. Residue aspartate 277 is part of the active site. The interval 357–486 is cytidylyltransferase; that stretch reads FTNGCFDLLH…TTATVTRLRS (130 aa).

The protein in the N-terminal section; belongs to the carbohydrate kinase PfkB family. This sequence in the C-terminal section; belongs to the cytidylyltransferase family. In terms of assembly, homodimer.

It catalyses the reaction D-glycero-beta-D-manno-heptose 7-phosphate + ATP = D-glycero-beta-D-manno-heptose 1,7-bisphosphate + ADP + H(+). It carries out the reaction D-glycero-beta-D-manno-heptose 1-phosphate + ATP + H(+) = ADP-D-glycero-beta-D-manno-heptose + diphosphate. The protein operates within nucleotide-sugar biosynthesis; ADP-L-glycero-beta-D-manno-heptose biosynthesis; ADP-L-glycero-beta-D-manno-heptose from D-glycero-beta-D-manno-heptose 7-phosphate: step 1/4. It functions in the pathway nucleotide-sugar biosynthesis; ADP-L-glycero-beta-D-manno-heptose biosynthesis; ADP-L-glycero-beta-D-manno-heptose from D-glycero-beta-D-manno-heptose 7-phosphate: step 3/4. Its function is as follows. Catalyzes the phosphorylation of D-glycero-D-manno-heptose 7-phosphate at the C-1 position to selectively form D-glycero-beta-D-manno-heptose-1,7-bisphosphate. In terms of biological role, catalyzes the ADP transfer from ATP to D-glycero-beta-D-manno-heptose 1-phosphate, yielding ADP-D-glycero-beta-D-manno-heptose. The sequence is that of Bifunctional protein HldE from Acidiphilium cryptum (strain JF-5).